We begin with the raw amino-acid sequence, 181 residues long: Oligoribonuclease (181 aa).

The Exonuclease domain occupies 8–171 (LIWIDLEMTG…QDIQESIAEL (164 aa)). Tyr129 is an active-site residue.

It belongs to the oligoribonuclease family.

The protein resides in the cytoplasm. Its function is as follows. 3'-to-5' exoribonuclease specific for small oligoribonucleotides. The chain is Oligoribonuclease from Shewanella sp. (strain MR-4).